We begin with the raw amino-acid sequence, 183 residues long: dTDP-4-dehydrorhamnose 3,5-epimerase (183 aa).

Substrate contacts are provided by residues Arg-24, Glu-29, 48-50 (QDN), and Arg-60. The active-site Proton acceptor is His-63. Residues Lys-73 and His-120 each contribute to the substrate site. The active-site Proton donor is the Tyr-133. The substrate site is built by Glu-144 and Lys-169.

The protein belongs to the dTDP-4-dehydrorhamnose 3,5-epimerase family. Homodimer.

It catalyses the reaction dTDP-4-dehydro-6-deoxy-alpha-D-glucose = dTDP-4-dehydro-beta-L-rhamnose. The protein operates within carbohydrate biosynthesis; dTDP-L-rhamnose biosynthesis. It functions in the pathway bacterial outer membrane biogenesis; LPS O-antigen biosynthesis. In terms of biological role, catalyzes the epimerization of the C3' and C5'positions of dTDP-6-deoxy-D-xylo-4-hexulose, forming dTDP-6-deoxy-L-lyxo-4-hexulose. The protein is dTDP-4-dehydrorhamnose 3,5-epimerase of Salmonella typhimurium (strain LT2 / SGSC1412 / ATCC 700720).